The primary structure comprises 461 residues: Ribulose bisphosphate carboxylase (461 aa).

N112 provides a ligand contact to substrate. K167 acts as the Proton acceptor in catalysis. K169 lines the substrate pocket. Positions 192, 194, and 195 each coordinate Mg(2+). K192 is modified (N6-carboxylysine). H288 (proton acceptor) is an active-site residue. Substrate contacts are provided by R289, H322, and S369.

It belongs to the RuBisCO large chain family. Type II subfamily. In terms of assembly, homodimer. Mg(2+) is required as a cofactor.

The enzyme catalyses 2 (2R)-3-phosphoglycerate + 2 H(+) = D-ribulose 1,5-bisphosphate + CO2 + H2O. The catalysed reaction is D-ribulose 1,5-bisphosphate + O2 = 2-phosphoglycolate + (2R)-3-phosphoglycerate + 2 H(+). Functionally, ruBisCO catalyzes two reactions: the carboxylation of D-ribulose 1,5-bisphosphate, the primary event in carbon dioxide fixation, as well as the oxidative fragmentation of the pentose substrate. Both reactions occur simultaneously and in competition at the same active site. The chain is Ribulose bisphosphate carboxylase from Rhodopseudomonas palustris (strain BisB18).